The sequence spans 99 residues: MIASMKPWPLVMVAALCILFCLGTLVDAYPTKPESPGPDATPEELAEYMTKIRQYINLVTRQRYGKRSSPETLMSELIFGENSNSDHSSRSRFDDSYMW.

The N-terminal stretch at 1–28 (MIASMKPWPLVMVAALCILFCLGTLVDA) is a signal peptide. Tyr64 carries the tyrosine amide modification. The propeptide at 68–99 (SSPETLMSELIFGENSNSDHSSRSRFDDSYMW) is C-terminal extension.

It belongs to the NPY family. In terms of tissue distribution, expressed by the mandibular venom gland.

The protein localises to the secreted. In terms of biological role, shows a potent unique triphasic action, rapid biphasic hypertension followed by prolonged hypotension. In Varanus eremius (Rusty desert monitor), this protein is Goannatyrotoxin-Vere1.